A 281-amino-acid polypeptide reads, in one-letter code: Ribosomal protein L11 methyltransferase (281 aa).

S-adenosyl-L-methionine-binding residues include Thr133, Gly154, Asp175, and Asn216.

The protein belongs to the methyltransferase superfamily. PrmA family.

It is found in the cytoplasm. It catalyses the reaction L-lysyl-[protein] + 3 S-adenosyl-L-methionine = N(6),N(6),N(6)-trimethyl-L-lysyl-[protein] + 3 S-adenosyl-L-homocysteine + 3 H(+). Its function is as follows. Methylates ribosomal protein L11. This chain is Ribosomal protein L11 methyltransferase, found in Campylobacter jejuni subsp. jejuni serotype O:6 (strain 81116 / NCTC 11828).